The primary structure comprises 929 residues: DNA mismatch repair protein MutS (929 aa).

The interval 22-46 is disordered; that stretch reads PAAPRSTGSAAAPPPSPAVLDDRSG. Low complexity predominate over residues 23–32; it reads AAPRSTGSAA. 678–685 lines the ATP pocket; that stretch reads GPNMAGKS.

This sequence belongs to the DNA mismatch repair MutS family.

Functionally, this protein is involved in the repair of mismatches in DNA. It is possible that it carries out the mismatch recognition step. This protein has a weak ATPase activity. The polypeptide is DNA mismatch repair protein MutS (Rhodospirillum rubrum (strain ATCC 11170 / ATH 1.1.1 / DSM 467 / LMG 4362 / NCIMB 8255 / S1)).